The chain runs to 181 residues: Inorganic pyrophosphatase (181 aa).

Substrate is bound by residues lysine 16, arginine 30, and tyrosine 42. The Mg(2+) site is built by aspartate 52, aspartate 57, and aspartate 89. Tyrosine 126 is a binding site for substrate.

It belongs to the PPase family. As to quaternary structure, homohexamer. The cofactor is Mg(2+).

The protein localises to the cytoplasm. The catalysed reaction is diphosphate + H2O = 2 phosphate + H(+). Catalyzes the hydrolysis of inorganic pyrophosphate (PPi) forming two phosphate ions. The sequence is that of Inorganic pyrophosphatase from Malacoplasma penetrans (strain HF-2) (Mycoplasma penetrans).